The sequence spans 344 residues: Thiamine thiazole synthase (344 aa).

Substrate is bound by residues Cys-90, Glu-111–Ala-112, Gly-119, and Val-184. Residue Cys-232 is modified to 2,3-didehydroalanine (Cys). Residues Asp-234, His-249, Met-301, and Arg-311 to Gly-313 each bind substrate.

Belongs to the THI4 family. In terms of assembly, homooctamer. Interacts with cyp-41. Fe cation serves as cofactor. In terms of processing, during the catalytic reaction, a sulfide is transferred from Cys-232 to a reaction intermediate, generating a dehydroalanine residue.

Its subcellular location is the cytoplasm. It localises to the nucleus. It carries out the reaction [ADP-thiazole synthase]-L-cysteine + glycine + NAD(+) = [ADP-thiazole synthase]-dehydroalanine + ADP-5-ethyl-4-methylthiazole-2-carboxylate + nicotinamide + 3 H2O + 2 H(+). Its function is as follows. Involved in biosynthesis of the thiamine precursor thiazole. Catalyzes the conversion of NAD and glycine to adenosine diphosphate 5-(2-hydroxyethyl)-4-methylthiazole-2-carboxylic acid (ADT), an adenylated thiazole intermediate. The reaction includes an iron-dependent sulfide transfer from a conserved cysteine residue of the protein to a thiazole intermediate. The enzyme can only undergo a single turnover, which suggests it is a suicide enzyme. May have additional roles in adaptation to various stress conditions and in DNA damage tolerance. The sequence is that of Thiamine thiazole synthase from Neurospora crassa (strain ATCC 24698 / 74-OR23-1A / CBS 708.71 / DSM 1257 / FGSC 987).